We begin with the raw amino-acid sequence, 364 residues long: Protein FAM81A (364 aa).

Coiled-coil stretches lie at residues F75–I107, N158–S189, and A261–N287. Residues E281 to H300 are disordered.

It belongs to the FAM81 family. As to quaternary structure, interacts with DLG4/PSD-95, GRIN2B/GLUN2B and SYNGAP1; the interactions facilitate condensate formation. Expressed in most regions of the brain (at protein level).

It is found in the postsynaptic density. It localises to the cytoplasm. Its function is as follows. Facilitates the interaction and assembly of proteins within the postsynaptic density by promoting the condensation of postsynaptic proteins via liquid-liquid phase separation. Required for neuronal activity. Accumulation at the postsynaptic density results in enlargement of dendritic spines. The chain is Protein FAM81A (Fam81a) from Mus musculus (Mouse).